The sequence spans 245 residues: Galectin-3 (245 aa).

The disordered stretch occupies residues 1-30 (MADGFSLNDALAGSGNPNPQGWPGAWGNQP). Alanine 2 bears the N-acetylalanine mark. Serine 6 carries the phosphoserine; by CK1 modification. 4 tandem repeats follow at residues 35–43 (YPGASYPGA), 44–52 (YPGQAPPGA), 53–61 (YPGQAPPGA), and 62–70 (YPGPTAPGA). The 7 X 9 AA tandem repeats of Y-P-G-X(3)-P-[GS]-A stretch occupies residues 35–99 (YPGASYPGAY…PSAPGAYPAA (65 aa)). The disordered stretch occupies residues 47 to 68 (QAPPGAYPGQAPPGAYPGPTAP). The stretch at 71–78 (YPGPAPGA) is one 5; approximate repeat. One copy of the 6; approximate repeat lies at 79-88 (YPGQPGASGA). Residues 89 to 99 (YPSAPGAYPAA) form a 7; approximate repeat. Residues 113 to 243 (YKLPLAGGVM…DITLTSAAPT (131 aa)) enclose the Galectin domain. 176–182 (WGREERQ) contacts a beta-D-galactoside. Serine 183 bears the Phosphoserine mark. The Nuclear export signal motif lies at 221-236 (KNLREINQMEISGDIT).

Probably forms homo- or heterodimers. Interacts with DMBT1. Interacts with CD6 and ALCAM. Forms a complex with the ITGA3, ITGB1 and CSPG4. Interacts with LGALS3BP, LYPD3, ZFTRAF1 and UACA. Interacts with TRIM16; this interaction mediates autophagy of damage endomembranes. Interacts with cargo receptor TMED10; the interaction mediates the translocation from the cytoplasm into the ERGIC (endoplasmic reticulum-Golgi intermediate compartment) and thereby secretion. Interacts with and inhibits by binding NCR3/NKp30.

It is found in the cytoplasm. The protein resides in the nucleus. The protein localises to the secreted. Galactose-specific lectin which binds IgE. May mediate with the alpha-3, beta-1 integrin the stimulation by CSPG4 of endothelial cells migration. Together with DMBT1, required for terminal differentiation of columnar epithelial cells during early embryogenesis. In the nucleus: acts as a pre-mRNA splicing factor. Involved in acute inflammatory responses including neutrophil activation and adhesion, chemoattraction of monocytes macrophages, opsonization of apoptotic neutrophils, and activation of mast cells. Together with TRIM16, coordinates the recognition of membrane damage with mobilization of the core autophagy regulators ATG16L1 and BECN1 in response to damaged endomembranes. When secreted, interacts with NK cell-activating receptor NCR3/NKp30 acting as an inhibitory ligand which antagonizes NK cell attack. The chain is Galectin-3 (LGALS3) from Cricetulus longicaudatus (Long-tailed dwarf hamster).